Consider the following 1161-residue polypeptide: MPVRRGHVAPQNTFLDTIIRKFEGQSRKFIIANARVENCAVIYCNDGFCELCGYSRAEVMQRPCTCDFLHGPRTQRRAAAQIAQALLGAEERKVEIAFYRKDGSCFLCLVDVVPVKNEDGAVIMFILNFEVVMEKDMVGSPARDTNHRGPPTSWLAPGRAKTFRLKLPALLALTARESSVRPGGAGGAGAPGAVVVDVDLTPAAPSSESLALDEVPAMDNHVAGLGPAEERRALVGSCSPPPPVSAPGPHPSLRAHSLNPDASGSSCSLARTRSRESCASVRRASSADDIEAMRAGALPPPPRHASTGAMHPLRSGLLNSTSDSDLVRYRTISKIPQITLNFVDLKGDPFLASPTSDREIIAPKIKERTHNVTEKVTQVLSLGADVLPEYKLQAPRIHRWTILHYSPFKAVWDWLILLLVIYTAVFTPYSAAFLLKETEEGPPAPECGYACQPLAVVDLIVDIMFIVDILINFRTTYVNANEEVVSHPGRIAVHYFKGWFLIDMVAAIPFDLLIFGSGSEELIGLLKTARLLRLVRVARKLDRYSEYGAAVLLLLMCTFALIAHWLACIWYAIGNMEQPHMDSRIGWLHNLGDQMGKPYNSSGLGGPSIKDKYVTGLYFTFSSLTSVGFGNVSPNTNSEKIFSICVMLIGSLMYASIFGNVSAIIQRLYSGTARYHTQMLRVREFIRFHQIPNPLRQRLEEYFQHAWSYTNGIDMNAVLKGFPECLQADICLHLNRSLLQHCKPFRGATKDCLRALAMKFKTTHAPPGDTLVHAGDLLTALYFISRGSIEILRGDVVVAILGKNDIFGEPLNLYARPGKSNGDVRALTYCDLHKIHRDDLLEVLDMYPEFSDHFWSSLEITFNLRDTNMIPGSPGSTEWEGGFNRQRKRKLSFRRRTDKDTEQPGEVSALGPGRAGAGPSSRGRPGGPWGESPSSGPSSPESSEDEGPGRSSSPLRLVPFSSPRPPGEPPGGEPLTEDCEKSSDTCNPLSGAFSGVSNIFSFWGDSRGRQYQELPRCPAPAPSLLNIPLSSPSRRPRGDVESRLDALQRQLNRLETRLSADMATVLQLLQRQMTLVPPAYSAVTTPGPGPTSTSPLLPVSPFPTLTLDSLSQVSQFMACEELPPGAPELPQEGPTRRLSLPGQLGALTSQPLHRHGSDPGS.

Residues 1–405 (MPVRRGHVAP…RIHRWTILHY (405 aa)) lie on the Cytoplasmic side of the membrane. The PAS domain occupies 17 to 88 (TIIRKFEGQS…AAQIAQALLG (72 aa)). The PAC domain maps to 92 to 144 (RKVEIAFYRKDGSCFLCLVDVVPVKNEDGAVIMFILNFEVVMEKDMVGSPARD). The segment at 233–286 (ALVGSCSPPPPVSAPGPHPSLRAHSLNPDASGSSCSLARTRSRESCASVRRASS) is disordered. Phosphoserine is present on residues S239 and S245. A compositionally biased stretch (pro residues) spans 239–250 (SPPPPVSAPGPH). The span at 260–271 (PDASGSSCSLAR) shows a compositional bias: polar residues. S285, S286, S322, and S353 each carry phosphoserine. A helical membrane pass occupies residues 406–426 (SPFKAVWDWLILLLVIYTAVF). The Extracellular segment spans residues 427-452 (TPYSAAFLLKETEEGPPAPECGYACQ). Residues 453–473 (PLAVVDLIVDIMFIVDILINF) traverse the membrane as a helical segment. The Cytoplasmic portion of the chain corresponds to 474 to 497 (RTTYVNANEEVVSHPGRIAVHYFK). Residues 498-518 (GWFLIDMVAAIPFDLLIFGSG) form a helical membrane-spanning segment. Topologically, residues 519–522 (SEEL) are extracellular. The chain crosses the membrane as a helical; Voltage-sensor span at residues 523–543 (IGLLKTARLLRLVRVARKLDR). At 544-549 (YSEYGA) the chain is on the cytoplasmic side. A helical transmembrane segment spans residues 550–570 (AVLLLLMCTFALIAHWLACIW). The Extracellular portion of the chain corresponds to 571 to 613 (YAIGNMEQPHMDSRIGWLHNLGDQMGKPYNSSGLGGPSIKDKY). N600 carries N-linked (GlcNAc...) asparagine glycosylation. Residues 614-634 (VTGLYFTFSSLTSVGFGNVSP) constitute an intramembrane region (pore-forming). The Selectivity filter motif lies at 626–631 (SVGFGN). The Extracellular portion of the chain corresponds to 635 to 640 (NTNSEK). Residues 641–661 (IFSICVMLIGSLMYASIFGNV) form a helical membrane-spanning segment. Residues 662–1161 (SAIIQRLYSG…LHRHGSDPGS (500 aa)) lie on the Cytoplasmic side of the membrane. The segment at 744–844 (PFRGATKDCL…IHRDDLLEVL (101 aa)) is cNMP-binding domain. A disordered region spans residues 872–985 (GSPGSTEWEG…TEDCEKSSDT (114 aa)). S873 and S876 each carry phosphoserine. A compositionally biased stretch (basic residues) spans 885–894 (RQRKRKLSFR). Low complexity predominate over residues 930-941 (GESPSSGPSSPE). Residues 962 to 972 (SPRPPGEPPGG) show a composition bias toward pro residues. R1016 is modified (omega-N-methylarginine). Residues 1037–1064 (RGDVESRLDALQRQLNRLETRLSADMAT) adopt a coiled-coil conformation. The segment at 1121 to 1161 (ELPPGAPELPQEGPTRRLSLPGQLGALTSQPLHRHGSDPGS) is disordered. S1139 carries the post-translational modification Phosphoserine.

This sequence belongs to the potassium channel family. H (Eag) (TC 1.A.1.20) subfamily. Kv11.1/KCNH2 sub-subfamily. As to quaternary structure, the potassium channel is probably composed of a homo- or heterotetrameric complex of pore-forming alpha subunits that can associate with modulating beta subunits. Interacts with DNAJB12 and DNAJB14; chaperones DNAJB12 and DNAJB14 promote tetramerization. Heteromultimer with KCNH6/ERG2 and KCNH7/ERG3. Interacts with ALG10B. Forms a stable complex with KCNE1 or KCNE2, and that this heteromultimerization regulates Inward rectifier potassium channel activity. Interacts with CANX. The core-glycosylated, but not the fully glycosylated form interacts with RNF207. Interacts with NDFIP1 and NDFIP2; this interaction decreases the cell membrane expression by targeting KCNH2, through interaction with NEDD4L, for the degradation through the multivesicular bodies (MVBs)-lysosomal pathway. Phosphorylated on serine and threonine residues. Phosphorylation by PKA inhibits ion conduction. Detected in heart, both in atrium and in left ventricle.

It localises to the cell membrane. It catalyses the reaction K(+)(in) = K(+)(out). Its function is as follows. Pore-forming (alpha) subunit of voltage-gated inwardly rectifying potassium channel. Characterized by unusual gating kinetics by producing relatively small outward currents during membrane depolarization and large inward currents during subsequent repolarization which reflect a rapid inactivation during depolarization and quick recovery from inactivation but slow deactivation (closing) during repolarization. Channel properties are modulated by cAMP and subunit assembly. Forms a stable complex with KCNE1 or KCNE2, and that this heteromultimerization regulates inward rectifier potassium channel activity. The sequence is that of Voltage-gated inwardly rectifying potassium channel KCNH2 from Oryctolagus cuniculus (Rabbit).